Consider the following 1179-residue polypeptide: DNA-directed RNA polymerase subunit beta (1179 aa).

Acidic residues predominate over residues 1153 to 1162 (MREMEDEDEG). Residues 1153–1179 (MREMEDEDEGNGEKLNLVLEGGSLNEE) are disordered.

This sequence belongs to the RNA polymerase beta chain family. In terms of assembly, the RNAP catalytic core consists of 2 alpha, 1 beta, 1 beta' and 1 omega subunit. When a sigma factor is associated with the core the holoenzyme is formed, which can initiate transcription.

It catalyses the reaction RNA(n) + a ribonucleoside 5'-triphosphate = RNA(n+1) + diphosphate. Its function is as follows. DNA-dependent RNA polymerase catalyzes the transcription of DNA into RNA using the four ribonucleoside triphosphates as substrates. The polypeptide is DNA-directed RNA polymerase subunit beta (Brevibacillus brevis (strain 47 / JCM 6285 / NBRC 100599)).